The primary structure comprises 584 residues: Isopropyl malate synthase htyA (584 aa).

One can recognise a Pyruvate carboxyltransferase domain in the interval 39–317; the sequence is PIWLSTDLRD…ETGLDFSNLP (279 aa).

The protein belongs to the alpha-IPM synthase/homocitrate synthase family. LeuA type 2 subfamily.

The enzyme catalyses 3-methyl-2-oxobutanoate + acetyl-CoA + H2O = (2S)-2-isopropylmalate + CoA + H(+). The protein operates within antifungal biosynthesis. Its function is as follows. Isopropyl malate synthase; part of the gene cluster that mediates the de novo generation of L-homotyrosine from acetyl-CoA and 4-hydroxyphenyl-pyruvate. L-homotyrosine is a building block of echinocandin B, a fungal lipidated cyclic hexapeptide that acts as an antifungal agent. L-homotyrosine 4-hydroxyphenyl-pyruvate first undergoes an aldol-type condensation by htyA with the C-2 of acetyl-CoA followed by the release of CoA to form 2-(4-hydroxybenzyl)-malate. This is followed by isomerization of 2-(4-hydroxy-benzyl)-malate to 3-(4-hydroxybenzyl)-malate by htyD. Thereafter, 3-(4-hydroxybenzyl)-malate undergoes decarboxylation and oxidation to form 2-oxo-4-(4-hydroxybenzyl)butanoic acid, coupled to reduction of NAD(+) to NADH by htyC. The product then undergoes transamination catalyzed by htyB to form L-homotyrosine. This Aspergillus rugulosus (Emericella rugulosa) protein is Isopropyl malate synthase htyA.